The following is a 136-amino-acid chain: Histone H3 (136 aa).

A disordered region spans residues 1–43 (MARTKQTARKSTGAKAPRKQLASKAARKSAPATGGIKKPHRFR). Residues Lys5 and Lys10 each carry the N6,N6,N6-trimethyllysine; alternate modification. An N6,N6-dimethyllysine; alternate modification is found at Lys5. N6-acetyllysine; alternate is present on residues Lys5 and Lys10. Lys5 is subject to N6-methyllysine; alternate. Ser11 bears the Phosphoserine mark. An N6-acetyllysine mark is found at Lys15, Lys19, and Lys24. N6,N6,N6-trimethyllysine; alternate is present on residues Lys28 and Lys37. N6,N6-dimethyllysine; alternate is present on residues Lys28 and Lys37. Residues Lys28, Lys37, and Lys57 each carry the N6-acetyllysine; alternate modification. An N6-methyllysine; alternate mark is found at Lys28, Lys37, and Lys57. N6-methyllysine is present on Lys80.

It belongs to the histone H3 family. The nucleosome is a histone octamer containing two molecules each of H2A, H2B, H3 and H4 assembled in one H3-H4 heterotetramer and two H2A-H2B heterodimers. The octamer wraps approximately 147 bp of DNA. Post-translationally, phosphorylated to form H3S10ph. H3S10ph promotes subsequent H3K14ac formation by GCN5. H3S10ph is only found in the mitotically dividing MIC, but not in the amitotically dividing MAC. H3S10ph is correlated with chromosome condensation during mitotic or meiotic micronuclear divisions. Acetylation of histone H3 leads to transcriptional activation. H3K14ac formation by GCN5 is promoted by H3S10ph. H3K9acK14ac is the preferred acetylated form of newly synthesized H3. Acetylation occurs almost exclusively in the MAC. In terms of processing, methylated to form H3K4me. H3K4me is only found in the transcriptionally active MAC. Methylated to form H3K9me in developing MACs during conjugation, when genome-wide DNA elimination occurs. At this stage, H3K9me specifically occurs on DNA sequences being eliminated (IES), probably targeted by small scan RNAs (scnRNAs) bound to IES, and is required for efficient IES elimination. H3K9me is required for the interaction with the chromodomains of PDD1 and PDD3. Post-translationally, the full-length protein H3S (slow migrating) is converted to H3F (fast migrating) by proteolytic removal of the first 6 residues. H3F is unique to MIC, and processing seems to occur regularly each generation at a specific point in the cell cycle.

It is found in the nucleus. Its subcellular location is the chromosome. Functionally, core component of nucleosome. Nucleosomes wrap and compact DNA into chromatin, limiting DNA accessibility to the cellular machineries which require DNA as a template. Histones thereby play a central role in transcription regulation, DNA repair, DNA replication and chromosomal stability. DNA accessibility is regulated via a complex set of post-translational modifications of histones, also called histone code, and nucleosome remodeling. This Tetrahymena pyriformis protein is Histone H3.